The sequence spans 102 residues: uncharacterized protein (102 aa).

This sequence belongs to the Gram-positive plasmids replication protein type 2 family.

This is an uncharacterized protein from Staphylococcus aureus.